A 250-amino-acid polypeptide reads, in one-letter code: Bcl-2-like protein 12 (250 aa).

The segment at Gly-24 to Phe-46 is disordered. Residue Ser-29 is modified to Phosphoserine. Thr-33 is subject to Phosphothreonine. Residue Ser-37 is modified to Phosphoserine. At Arg-60 the chain carries Omega-N-methylarginine. Residues Ser-111, Ser-158, Ser-159, Ser-161, and Ser-189 each carry the phosphoserine modification. The short motif at Trp-227–Leu-238 is the BH2 element.

It belongs to the Bcl-2 family. In terms of tissue distribution, expressed mainly in breast, thymus, prostate, fetal liver, colon, placenta, pancreas, small intestine, spinal cord, kidney, and bone marrow and to a lesser extent in many other tissues. Isoform 2 is primarily expressed in skeletal muscle.

This Homo sapiens (Human) protein is Bcl-2-like protein 12.